A 566-amino-acid polypeptide reads, in one-letter code: MKISRQAYADMFGPTVGDKVRLADTELWIEVEQDFTTYGEEVKFGGGKVIRDGQGQSQLLAAEVVDTVITNALIIDHWGIVKADVGLKDGRIAAIGKAGNPDVQPGVTIAIGASSEVIAGEGMILTAGGIDTHIHFICPQQIEEALMSGVTTMIGGGTGPATGTNATTCTSGPWHLARMLQAADAFPMNIGLTGKGNASLPEPLIEQVKAGAIGLKLHEDWGTTPASIDNCLSVADQYDVQVAIHTDTLNESGFVETTLGAFKGRTIHTYHTEGAGGGHAPDIIKACGFANVLPSSTNPTRPFTRNTIDEHLDMLMVCHHLDPSIAEDVAFAESRIRRETIAAEDILHDLGAFSMISSDSQAMGRVGEVITRTWQTADKMKKQRGPLPQDGEGNDNFRAKRYIAKYTINPAITHGISHEVGSVEVGKWADLVLWRPAFFGVKPTLILKGGAIAASLMGDANASIPTPQPVHYRPMFASYGGSLHATSLTFISQAAQASGLPEALGLKKKIAVVKGCRDVQKTDLIHNDYLPNIDVDPQTYQVKADGVLLWCEPAETLPMAQRYFLF.

A Urease domain is found at 128 to 566 (GGIDTHIHFI…LPMAQRYFLF (439 aa)). Residues histidine 133, histidine 135, and lysine 216 each contribute to the Ni(2+) site. Lysine 216 bears the N6-carboxylysine mark. Substrate is bound at residue histidine 218. Residues histidine 245 and histidine 271 each contribute to the Ni(2+) site. The Proton donor role is filled by histidine 319. Residue aspartate 359 participates in Ni(2+) binding.

Belongs to the metallo-dependent hydrolases superfamily. Urease alpha subunit family. In terms of assembly, heterotrimer of UreA (gamma), UreB (beta) and UreC (alpha) subunits. Three heterotrimers associate to form the active enzyme. Ni cation serves as cofactor. In terms of processing, carboxylation allows a single lysine to coordinate two nickel ions.

It localises to the cytoplasm. The catalysed reaction is urea + 2 H2O + H(+) = hydrogencarbonate + 2 NH4(+). It participates in nitrogen metabolism; urea degradation; CO(2) and NH(3) from urea (urease route): step 1/1. This Pseudomonas fluorescens (strain Pf0-1) protein is Urease subunit alpha.